We begin with the raw amino-acid sequence, 177 residues long: B-phycoerythrin beta chain (177 aa).

Cysteine 50 and cysteine 61 together coordinate phycourobilin. Asparagine 72 is subject to N4-methylasparagine. (2R,3E)-phycoerythrobilin contacts are provided by cysteine 82 and cysteine 158.

The protein belongs to the phycobiliprotein family. Heteromer of 6 alpha, 6 beta and one gamma chain. In terms of processing, contains two covalently linked phycoerythrobilin chromophores and one covalently linked phycourobilin chromophore.

The protein localises to the plastid. It localises to the chloroplast thylakoid membrane. Light-harvesting photosynthetic bile pigment-protein from the phycobiliprotein complex. This chain is B-phycoerythrin beta chain (cpeB), found in Rhodella violacea (Red alga).